The following is a 177-amino-acid chain: MSRVAKNPVKLPAGVEVKFAGQQLSVKGAKGTLELNVHSSVEIVQEAGELRFAARNGDQQTRAMAGTTRALVNNMVQGVSQGFERKLQLVGVGYKAQAKGTVLNLALGFSHPVDYELPEGITAETPSQTDILIKGIDKQLVGQVAAEIRDFRPPEPYKGKGVRYADEVVRRKEAKKK.

The protein belongs to the universal ribosomal protein uL6 family. Part of the 50S ribosomal subunit.

This protein binds to the 23S rRNA, and is important in its secondary structure. It is located near the subunit interface in the base of the L7/L12 stalk, and near the tRNA binding site of the peptidyltransferase center. The chain is Large ribosomal subunit protein uL6 from Pseudomonas fluorescens (strain ATCC BAA-477 / NRRL B-23932 / Pf-5).